Reading from the N-terminus, the 476-residue chain is Aspartyl/glutamyl-tRNA(Asn/Gln) amidotransferase subunit B (476 aa).

It belongs to the GatB/GatE family. GatB subfamily. In terms of assembly, heterotrimer of A, B and C subunits.

It carries out the reaction L-glutamyl-tRNA(Gln) + L-glutamine + ATP + H2O = L-glutaminyl-tRNA(Gln) + L-glutamate + ADP + phosphate + H(+). It catalyses the reaction L-aspartyl-tRNA(Asn) + L-glutamine + ATP + H2O = L-asparaginyl-tRNA(Asn) + L-glutamate + ADP + phosphate + 2 H(+). Functionally, allows the formation of correctly charged Asn-tRNA(Asn) or Gln-tRNA(Gln) through the transamidation of misacylated Asp-tRNA(Asn) or Glu-tRNA(Gln) in organisms which lack either or both of asparaginyl-tRNA or glutaminyl-tRNA synthetases. The reaction takes place in the presence of glutamine and ATP through an activated phospho-Asp-tRNA(Asn) or phospho-Glu-tRNA(Gln). This Enterococcus faecalis (strain ATCC 700802 / V583) protein is Aspartyl/glutamyl-tRNA(Asn/Gln) amidotransferase subunit B.